The following is a 365-amino-acid chain: Putative DNA-directed RNA polymerase subunit alpha-like 3 (365 aa).

It belongs to the RNA polymerase alpha chain family. As to quaternary structure, in plastids the minimal PEP RNA polymerase catalytic core is composed of four subunits: alpha, beta, beta', and beta''. When a (nuclear-encoded) sigma factor is associated with the core the holoenzyme is formed, which can initiate transcription.

The protein resides in the plastid. It is found in the chloroplast. The enzyme catalyses RNA(n) + a ribonucleoside 5'-triphosphate = RNA(n+1) + diphosphate. Its function is as follows. DNA-dependent RNA polymerase catalyzes the transcription of DNA into RNA using the four ribonucleoside triphosphates as substrates. The polypeptide is Putative DNA-directed RNA polymerase subunit alpha-like 3 (rpoAL3-A) (Pelargonium hortorum (Common geranium)).